Consider the following 292-residue polypeptide: uncharacterized protein (292 aa).

A Glycyl lysine isopeptide (Lys-Gly) (interchain with G-Cter in SUMO2) cross-link involves residue K8. The tract at residues 47-67 (TKRKMLPSSSSRMRSDGFDEE) is disordered. K76 participates in a covalent cross-link: Glycyl lysine isopeptide (Lys-Gly) (interchain with G-Cter in SUMO2). N94 carries the phosphothreonine modification. K96 and F97 each carry phosphoserine. The disordered stretch occupies residues 122 to 292 (ETDSDQQDIT…ERSAESSEDD (171 aa)). T123 carries the post-translational modification Phosphothreonine. Phosphoserine is present on residues S125 and D126. Residues 128 to 140 (QDITNGKKTSPQV) are compositionally biased toward polar residues. The span at 147–173 (SRKHKKSKKSHKKKQKKRSHKKQKKSK) shows a compositional bias: basic residues. Polar residues predominate over residues 180–194 (TADSSSEFSEETGAS). Composition is skewed to basic residues over residues 197–215 (RKGKQPHKRKKKSRKKSLK) and 247–259 (KKTKRKKREKKAH). A compositionally biased stretch (basic and acidic residues) spans 280-292 (ATDERSAESSEDD).

This is an uncharacterized protein from Homo sapiens (Human).